The chain runs to 517 residues: Endoglycoceramidase (517 aa).

A signal peptide spans 1–17 (MISVALIILFLAKVISG). The N-linked (GlcNAc...) asparagine glycan is linked to asparagine 99. Glutamate 230 serves as the catalytic Proton donor. Asparagine 298, asparagine 380, and asparagine 393 each carry an N-linked (GlcNAc...) asparagine glycan.

This sequence belongs to the glycosyl hydrolase 5 (cellulase A) family. As to expression, expressed uniformly in digestive cells, tentacles and peduncle regions suggesting expression in the endoderm throughout the whole body (at protein level).

It is found in the secreted. It catalyses the reaction an oligoglycosyl-(1-&gt;4)-beta-D-glucosyl-(1&lt;-&gt;1)-ceramide + H2O = an oligoglycosyl-(1-&gt;4)-D-glucose + an N-acyl-sphingoid base. Its activity is regulated as follows. Cu(2+), zinc, manganese, calcium, magnesium and EDTA have no significant effects on enzyme activity. Enzyme requires presence of detergents such as Triton X-100 and Lubrol PX for the hydrolysis of glycosphingolipids. Taurodeoxycholate strongly inhibits the enzyme activity. Functionally, hydrolysis of the glycosidic linkage between oligosaccharides and ceramides of glycosphingolipids, optimal substrates appear to be the glycosphingolipids with a gangliotetraose structure. The sequence is that of Endoglycoceramidase from Hydra vulgaris (Hydra).